The following is a 350-amino-acid chain: CMP-N-acetylneuraminate-beta-galactosamide-alpha-2,3-sialyltransferase 2 (350 aa).

At 1–6 the chain is on the cytoplasmic side; that stretch reads MKCSLR. Residues 7–27 traverse the membrane as a helical; Signal-anchor for type II membrane protein segment; that stretch reads VWFLSMAFLLVFIMSLLFTYS. Over 28–350 the chain is Lumenal; the sequence is HHSMATLPYL…ASKIEVYRGN (323 aa). Disulfide bonds link Cys70/Cys75, Cys72/Cys149, and Cys152/Cys291. Residues Gln116, Asn157, and Asn180 each contribute to the substrate site. Asn211 carries an N-linked (GlcNAc...) asparagine glycan. Substrate contacts are provided by Tyr240, Tyr276, Gly280, Gly300, His309, and His326.

The protein belongs to the glycosyltransferase 29 family. As to quaternary structure, homodimer; disulfide-linked. Homodimer formation occurs in the endoplasmic reticulum. In terms of processing, the soluble form derives from the membrane form by proteolytic processing. N-glycosylated; necessary for proper exit from endoplasmic reticulum and trafficking to the Golgi apparatus.

The protein resides in the golgi apparatus. It localises to the golgi stack membrane. The protein localises to the secreted. It carries out the reaction a beta-D-galactosyl-(1-&gt;3)-N-acetyl-alpha-D-galactosaminyl derivative + CMP-N-acetyl-beta-neuraminate = an N-acetyl-alpha-neuraminyl-(2-&gt;3)-beta-D-galactosyl-(1-&gt;3)-N-acetyl-alpha-D-galactosaminyl derivative + CMP + H(+). The enzyme catalyses a ganglioside GM1 (d18:1(4E)) + CMP-N-acetyl-beta-neuraminate = a ganglioside GD1a (d18:1(4E)) + CMP + H(+). The catalysed reaction is ganglioside GM1 (d18:1(4E)/18:0) + CMP-N-acetyl-beta-neuraminate = ganglioside GD1a (18:1(4E)/18:0) + CMP + H(+). It catalyses the reaction a ganglioside GA1 + CMP-N-acetyl-beta-neuraminate = a ganglioside GM1b + CMP + H(+). It carries out the reaction a ganglioside GA1 (d18:1(4E)) + CMP-N-acetyl-beta-neuraminate = a ganglioside GM1b (d18:1(4E)) + CMP + H(+). The enzyme catalyses a globoside GalGb4Cer + CMP-N-acetyl-beta-neuraminate = a globoside MSGG + CMP + H(+). Its pathway is protein modification; protein glycosylation. It participates in glycolipid biosynthesis. In terms of biological role, a beta-galactoside alpha2-3 sialyltransferase primarily involved in terminal sialylation of ganglio and globo series glycolipids. Catalyzes the transfer of sialic acid (N-acetyl-neuraminic acid; Neu5Ac) from the nucleotide sugar donor CMP-Neu5Ac onto acceptor Galbeta-(1-&gt;3)-GalNAc-terminated glycoconjugates through an alpha2-3 linkage. Sialylates GM1/GM1a, GA1/asialo-GM1 gangliosides to form GD1a and GM1b, respectively. Together with ST3GAL3, primarily responsible for biosynthesis of brain gangliosides that function as ligand for myelin-associated glycoprotein MAG on axons, regulating MAG expression and axonal myelin stability and regeneration. Responsible for the sialylation of the pluripotent stem cell- and cancer stem cell-associated antigen SSEA3, forming SSEA4. Sialylates with low efficiency asialofetuin, presumably onto O-glycosidically linked Galbeta-(1-&gt;3)-GalNAc-O-Ser. This is CMP-N-acetylneuraminate-beta-galactosamide-alpha-2,3-sialyltransferase 2 (St3gal2) from Rattus norvegicus (Rat).